Reading from the N-terminus, the 791-residue chain is RAS guanyl-releasing protein 1 (791 aa).

The N-terminal Ras-GEF domain occupies 49 to 172 (LGKLSKGASL…RLIDTAQINS (124 aa)). Residues 53–106 (SKGASLDDLIQMCIQAFDLDGNMGQNSELLQIMLTMHGFLLPSTELLMKLRTLY) form a ras exchanger motif region; required for transforming activity region. The Ras-GEF domain occupies 201 to 432 (EPQELAEHLT…YELSYAREPR (232 aa)). EF-hand domains follow at residues 466–501 (HVQR…FPFS) and 502–528 (FCVM…ASSI). The Ca(2+) site is built by aspartate 479, aspartate 481, aspartate 483, tyrosine 485, glutamate 490, aspartate 506, aspartate 508, glutamate 510, and glutamate 517. A Phorbol-ester/DAG-type zinc finger spans residues 537-587 (LHNFQETTYLRPTFCDNCAGFLWGVIKQGYRCKDCGMNCHKQCKELVVFEC). Polar residues predominate over residues 683-695 (QVPSPQRSRTPGL). A disordered region spans residues 683 to 715 (QVPSPQRSRTPGLTSHLPISPMPSPCPSPVPTR). Residues 702 to 712 (SPMPSPCPSPV) are compositionally biased toward pro residues. Residues 728-785 (IRKARAELRGGKAGIQELEKEKALLKEENTTLKIQLKDAQRRVETLRAELRKYVLDSD) adopt a coiled-coil conformation.

This sequence belongs to the RASGRP family.

The protein localises to the cytoplasm. It is found in the cytosol. Its subcellular location is the cell membrane. The protein resides in the golgi apparatus membrane. It localises to the endoplasmic reticulum membrane. With respect to regulation, regulated by F-actin polymerization and probably by calcium. Functions as a diacylglycerol (DAG)-regulated nucleotide exchange factor specifically activating Ras through the exchange of bound GDP for GTP. This is RAS guanyl-releasing protein 1 (rasgrp1) from Xenopus tropicalis (Western clawed frog).